Consider the following 629-residue polypeptide: tRNA uridine 5-carboxymethylaminomethyl modification enzyme MnmG (629 aa).

13–18 (GGGHAG) lines the FAD pocket. 273-287 (GPRYCPSIEDKVNRF) serves as a coordination point for NAD(+).

Belongs to the MnmG family. In terms of assembly, homodimer. Heterotetramer of two MnmE and two MnmG subunits. FAD serves as cofactor.

Its subcellular location is the cytoplasm. NAD-binding protein involved in the addition of a carboxymethylaminomethyl (cmnm) group at the wobble position (U34) of certain tRNAs, forming tRNA-cmnm(5)s(2)U34. The sequence is that of tRNA uridine 5-carboxymethylaminomethyl modification enzyme MnmG from Shewanella pealeana (strain ATCC 700345 / ANG-SQ1).